We begin with the raw amino-acid sequence, 34 residues long: Photosystem II reaction center protein Y (34 aa).

At 1 to 5 the chain is on the lumenal side; sequence DWRVL. The chain crosses the membrane as a helical span at residues 6 to 22; it reads VVLLPVLLAAGWAVRNI. Residues 23–34 are Cytoplasmic-facing; sequence LPYAVKQVQKLL.

Belongs to the PsbY family. In terms of assembly, PSII is composed of 1 copy each of membrane proteins PsbA, PsbB, PsbC, PsbD, PsbE, PsbF, PsbH, PsbI, PsbJ, PsbK, PsbL, PsbM, PsbT, PsbX, PsbY, PsbZ, Psb30/Ycf12, peripheral proteins PsbO, CyanoQ (PsbQ), PsbU, PsbV and a large number of cofactors. It forms dimeric complexes. This protein is only loosely associated with PSII, and is not often found in crystals. PSII binds multiple chlorophylls, carotenoids and specific lipids. serves as cofactor.

It is found in the cellular thylakoid membrane. Loosely associated component of the core of photosystem II (PSII). PSII is a light-driven water plastoquinone oxidoreductase, using light energy to abstract electrons from H(2)O, generating a proton gradient subsequently used for ATP formation. This is Photosystem II reaction center protein Y from Thermostichus vulcanus (Synechococcus vulcanus).